Reading from the N-terminus, the 65-residue chain is Large ribosomal subunit protein bL35 (65 aa).

Residues 1 to 26 are disordered; the sequence is MPKIKTVRGAAKRFKKTASGGFKRKQ. Positions 10-26 are enriched in basic residues; sequence AAKRFKKTASGGFKRKQ.

The protein belongs to the bacterial ribosomal protein bL35 family.

The protein is Large ribosomal subunit protein bL35 of Mannheimia succiniciproducens (strain KCTC 0769BP / MBEL55E).